We begin with the raw amino-acid sequence, 393 residues long: Pyrimidine monooxygenase RutA (393 aa).

Residues 79-80, N145, E154, 170-171, and S220 contribute to the FMN site; these read IK and RY.

This sequence belongs to the NtaA/SnaA/DszA monooxygenase family. RutA subfamily.

The enzyme catalyses uracil + FMNH2 + NADH + O2 = (Z)-3-ureidoacrylate + FMN + NAD(+) + H2O + H(+). The catalysed reaction is thymine + FMNH2 + NADH + O2 = (Z)-2-methylureidoacrylate + FMN + NAD(+) + H2O + H(+). Functionally, catalyzes the pyrimidine ring opening between N-3 and C-4 by an unusual flavin hydroperoxide-catalyzed mechanism, adding oxygen atoms in the process to yield ureidoacrylate peracid, that immediately reacts with FMN forming ureidoacrylate and FMN-N(5)-oxide. The FMN-N(5)-oxide reacts spontaneously with NADH to produce FMN. Requires the flavin reductase RutF to regenerate FMN in vivo. This chain is Pyrimidine monooxygenase RutA, found in Escherichia coli O9:H4 (strain HS).